The following is a 125-amino-acid chain: Larval cuticle protein LCP-14 (125 aa).

The signal sequence occupies residues 1–16 (MKSFIVALCVVGCVLA). Positions 33-102 (EGSYNYAFES…PQADFLPTPP (70 aa)) constitute a Chitin-binding type R&amp;R domain.

Functionally, component of the cuticle of the larva of tobacco hornworm. This Manduca sexta (Tobacco hawkmoth) protein is Larval cuticle protein LCP-14 (LCP-14).